Consider the following 397-residue polypeptide: 1-deoxy-D-xylulose 5-phosphate reductoisomerase (397 aa).

8 residues coordinate NADPH: Thr-12, Gly-13, Ser-14, Ile-15, Gly-38, Lys-39, Asn-40, and Asn-126. A 1-deoxy-D-xylulose 5-phosphate-binding site is contributed by Lys-127. Glu-128 is a binding site for NADPH. Asp-152 lines the Mn(2+) pocket. Residues Ser-153, Glu-154, Ser-188, and His-211 each contribute to the 1-deoxy-D-xylulose 5-phosphate site. Glu-154 contributes to the Mn(2+) binding site. Gly-217 serves as a coordination point for NADPH. Residues Ser-224, Asn-229, Lys-230, and Glu-233 each coordinate 1-deoxy-D-xylulose 5-phosphate. Glu-233 serves as a coordination point for Mn(2+).

This sequence belongs to the DXR family. Requires Mg(2+) as cofactor. Mn(2+) is required as a cofactor.

It carries out the reaction 2-C-methyl-D-erythritol 4-phosphate + NADP(+) = 1-deoxy-D-xylulose 5-phosphate + NADPH + H(+). The protein operates within isoprenoid biosynthesis; isopentenyl diphosphate biosynthesis via DXP pathway; isopentenyl diphosphate from 1-deoxy-D-xylulose 5-phosphate: step 1/6. In terms of biological role, catalyzes the NADPH-dependent rearrangement and reduction of 1-deoxy-D-xylulose-5-phosphate (DXP) to 2-C-methyl-D-erythritol 4-phosphate (MEP). The polypeptide is 1-deoxy-D-xylulose 5-phosphate reductoisomerase (Haemophilus influenzae (strain PittGG)).